A 315-amino-acid polypeptide reads, in one-letter code: Methionyl-tRNA formyltransferase (315 aa).

113 to 116 (SLLP) serves as a coordination point for (6S)-5,6,7,8-tetrahydrofolate.

Belongs to the Fmt family.

The catalysed reaction is L-methionyl-tRNA(fMet) + (6R)-10-formyltetrahydrofolate = N-formyl-L-methionyl-tRNA(fMet) + (6S)-5,6,7,8-tetrahydrofolate + H(+). Functionally, attaches a formyl group to the free amino group of methionyl-tRNA(fMet). The formyl group appears to play a dual role in the initiator identity of N-formylmethionyl-tRNA by promoting its recognition by IF2 and preventing the misappropriation of this tRNA by the elongation apparatus. This chain is Methionyl-tRNA formyltransferase, found in Shigella boydii serotype 18 (strain CDC 3083-94 / BS512).